A 140-amino-acid polypeptide reads, in one-letter code: Large-conductance mechanosensitive channel (140 aa).

Helical transmembrane passes span 7–27 (EFAFKGNVLDLAVAVVMGAAF), 30–50 (IITSLVTYIIMPLIGLIFGTV), and 64–84 (GLFVQSVIDFLIVAFALFLFV).

Belongs to the MscL family. Homopentamer.

The protein localises to the cell membrane. Channel that opens in response to stretch forces in the membrane lipid bilayer. May participate in the regulation of osmotic pressure changes within the cell. The polypeptide is Large-conductance mechanosensitive channel (Staphylococcus carnosus (strain TM300)).